The primary structure comprises 433 residues: Trigger factor (433 aa).

The PPIase FKBP-type domain maps to 163–248; the sequence is GDVVVLDFAA…VHAVKERRLP (86 aa).

This sequence belongs to the FKBP-type PPIase family. Tig subfamily.

It is found in the cytoplasm. The enzyme catalyses [protein]-peptidylproline (omega=180) = [protein]-peptidylproline (omega=0). In terms of biological role, involved in protein export. Acts as a chaperone by maintaining the newly synthesized protein in an open conformation. Functions as a peptidyl-prolyl cis-trans isomerase. This chain is Trigger factor, found in Nitratidesulfovibrio vulgaris (strain DP4) (Desulfovibrio vulgaris).